The following is a 206-amino-acid chain: 2-phospho-L-lactate guanylyltransferase (206 aa).

This sequence belongs to the CofC family. In terms of assembly, homodimer.

The catalysed reaction is (2S)-2-phospholactate + GTP + H(+) = (2S)-lactyl-2-diphospho-5'-guanosine + diphosphate. It functions in the pathway cofactor biosynthesis; coenzyme F420 biosynthesis. Guanylyltransferase that catalyzes the activation of (2S)-2-phospholactate (2-PL) as (2S)-lactyl-2-diphospho-5'-guanosine, via the condensation of 2-PL with GTP. It is involved in the biosynthesis of coenzyme F420, a hydride carrier cofactor. The protein is 2-phospho-L-lactate guanylyltransferase of Archaeoglobus profundus (strain DSM 5631 / JCM 9629 / NBRC 100127 / Av18).